Reading from the N-terminus, the 329-residue chain is Sex comb on midleg-like protein 1 (329 aa).

2 positions are modified to phosphoserine: Ser-138 and Ser-238. Positions 138 to 157 (SPTLPVSRRENNSPSNLPRP) are disordered. The 68-residue stretch at 258–325 (WSVEAVVLFL…YYIDRLKQGK (68 aa)) folds into the SAM domain.

This sequence belongs to the SCM family.

The protein resides in the nucleus. In terms of biological role, putative Polycomb group (PcG) protein. PcG proteins act by forming multiprotein complexes, which are required to maintain the transcriptionally repressive state of homeotic genes throughout development. May be involved in spermatogenesis during sexual maturation. This chain is Sex comb on midleg-like protein 1 (SCML1), found in Pan troglodytes (Chimpanzee).